Reading from the N-terminus, the 132-residue chain is Small ribosomal subunit protein uS8 (132 aa).

The protein belongs to the universal ribosomal protein uS8 family. As to quaternary structure, part of the 30S ribosomal subunit. Contacts proteins S5 and S12.

Functionally, one of the primary rRNA binding proteins, it binds directly to 16S rRNA central domain where it helps coordinate assembly of the platform of the 30S subunit. This chain is Small ribosomal subunit protein uS8, found in Ligilactobacillus salivarius (strain UCC118) (Lactobacillus salivarius).